Consider the following 479-residue polypeptide: Probable periplasmic serine endoprotease DegP-like (479 aa).

The signal sequence occupies residues 1–27 (MSMPSLKKYAAALFAVFLMGQSVAAHA). Catalysis depends on charge relay system residues H118, D148, and S221. Residues 219 to 221 (GNS) and 276 to 280 (LGVVI) each bind substrate. PDZ domains follow at residues 265 to 356 (LKAS…VREG) and 362 to 468 (KVAV…LRQG). The interval 368–390 (MPADDGDEATNDAAPSAERSSNR) is disordered.

The protein belongs to the peptidase S1C family.

The protein localises to the periplasm. The enzyme catalyses Acts on substrates that are at least partially unfolded. The cleavage site P1 residue is normally between a pair of hydrophobic residues, such as Val-|-Val.. Its function is as follows. Might be efficient in the degradation of transiently denatured and unfolded proteins which accumulate in the periplasm following stress conditions. The protein is Probable periplasmic serine endoprotease DegP-like of Pseudomonas fulva (strain 12-X).